The chain runs to 2144 residues: Polyketide synthase-like protein Preu9 (2144 aa).

The Ketosynthase family 3 (KS3) domain maps to 1–250; sequence MYALHLAVNA…GANAHCIIDH (250 aa). Positions 276–325 are disordered; that stretch reads QNGHLNEFAANGTTNAPSRDHRNGITDGRADGNTNGHPNANGDVGGNPIN. Residues 293 to 305 show a composition bias toward basic and acidic residues; that stretch reads SRDHRNGITDGRA. The malonyl-CoA:ACP transacylase (MAT) stretch occupies residues 435-738; the sequence is FVFTGQGAQW…KSPVEQILKS (304 aa). The N-terminal hotdog fold stretch occupies residues 827–965; that stretch reads HDLLGSKVVG…GCVKLIIKSS (139 aa). The segment at 827 to 1137 is dehydratase (DH) domain; that stretch reads HDLLGSKVVG…ERLRCVSYSR (311 aa). One can recognise a PKS/mFAS DH domain in the interval 827–1141; sequence HDLLGSKVVG…CVSYSRISSD (315 aa). The active-site Proton acceptor; for dehydratase activity is the H859. The interval 979–1141 is C-terminal hotdog fold; the sequence is TLRPVDVRAW…CVSYSRISSD (163 aa). The active-site Proton donor; for dehydratase activity is the D1050. The interval 1305-1494 is methyltransferase (MT) domain; sequence TGIYPQLHRI…GLDVVLDDFP (190 aa). Residues 1731–2042 are enoyl reductase (ER) domain; the sequence is GVPNSLCFAS…LANMIGKLVV (312 aa).

Its function is as follows. Polyketide synthase-like protein that lacks important domains such as carrier domain and does probably not function as a polyketide synthase. The sequence is that of Polyketide synthase-like protein Preu9 from Preussia isomera (Coprophilous fungus).